The following is a 94-amino-acid chain: uncharacterized protein (94 aa).

The first 26 residues, 1–26, serve as a signal peptide directing secretion; sequence MNDQRDQAVPWATGLAVAGFVAAVIA. The next 2 helical transmembrane spans lie at 42–62 and 71–91; these read LLAV…LWGW and FVLG…ALTL.

It is found in the cell membrane. This is an uncharacterized protein from Mycobacterium tuberculosis (strain CDC 1551 / Oshkosh).